The following is a 333-amino-acid chain: D-alanine--D-alanine ligase (333 aa).

The ATP-grasp domain maps to 124 to 329; the sequence is KMWFSALGIP…FTEYLYSNIK (206 aa). 154 to 209 is an ATP binding site; it reads ALETWGSVFIKAASQGSSVGCYRVDSIDELASSLKEAFSYSPYVVVEKTIHARELE. 3 residues coordinate Mg(2+): aspartate 283, glutamate 296, and asparagine 298.

It belongs to the D-alanine--D-alanine ligase family. Mg(2+) serves as cofactor. Mn(2+) is required as a cofactor.

The protein resides in the cytoplasm. The enzyme catalyses 2 D-alanine + ATP = D-alanyl-D-alanine + ADP + phosphate + H(+). It functions in the pathway cell wall biogenesis; peptidoglycan biosynthesis. In terms of biological role, cell wall formation. The protein is D-alanine--D-alanine ligase of Shewanella sediminis (strain HAW-EB3).